Reading from the N-terminus, the 534-residue chain is Probable alanine aminotransferase, mitochondrial (534 aa).

A mitochondrion-targeting transit peptide spans 1–18; that stretch reads MFKRSLKVLLSNPPINRV. Lys352 bears the N6-(pyridoxal phosphate)lysine mark.

Belongs to the class-I pyridoxal-phosphate-dependent aminotransferase family. Alanine aminotransferase subfamily. In terms of assembly, homodimer. Pyridoxal 5'-phosphate serves as cofactor.

Its subcellular location is the mitochondrion matrix. It catalyses the reaction L-alanine + 2-oxoglutarate = pyruvate + L-glutamate. Its pathway is amino-acid degradation; L-alanine degradation via transaminase pathway; pyruvate from L-alanine: step 1/1. This chain is Probable alanine aminotransferase, mitochondrial (gpt), found in Dictyostelium discoideum (Social amoeba).